Consider the following 119-residue polypeptide: Protein TusC (119 aa).

The protein belongs to the DsrF/TusC family. As to quaternary structure, heterohexamer, formed by a dimer of trimers. The hexameric TusBCD complex contains 2 copies each of TusB, TusC and TusD. The TusBCD complex interacts with TusE.

The protein resides in the cytoplasm. Functionally, part of a sulfur-relay system required for 2-thiolation of 5-methylaminomethyl-2-thiouridine (mnm(5)s(2)U) at tRNA wobble positions. The polypeptide is Protein TusC (Klebsiella pneumoniae (strain 342)).